Consider the following 538-residue polypeptide: MTVNKGISIRVNNVGDKVSYKENELLTNYTYHTNVVHTNSDKTQFEVTPLDKNYQFKVDLNKPERLGVMLVGLGGNNGSTMMAAVLANKHNVCFRTRDKEGLTEPNYYGSLTQSSTIKLGVDSKGKDVYVPFNSLVPMVNPNDFVVSGWDINGATMDQAMERASVLEVDLRNKLAPMMKDHKPLKSVYYPDFIAANQDERADNCLNVDPQTGKVTTTGKWEHLNHIRNDIRTFKQQNDLDKVIILWTANTERYVEILPGVNDTMENLLEAIKNDHTEIAPSTIFAAASILEHCPYINGSPQNTFVPGLIELAEKNDSLIAGDDFKSGQTKMKSVLAQFLVDAGIRPVSIASYNHLGNNDGYNLSSPQQFRSKEISKASVVDDIIESNPILYNDKLGNKIDHCIVIKYMHAVGDSKVAMDEYYSELMLGGHNRISIHNVCEDSLLATPLIIDLIVMTEFCSRVTYRNVDGQDGAEAKGDFENFYPVLSFLSYWLKAPLTKPGYQPINGLNKQRTALENFLRLLIGLPAIDELRFEERLK.

26 residues coordinate NAD(+): G74, G75, N76, N77, D150, S186, V187, Q197, D198, R200, T247, A248, N249, T250, G298, S299, D323, S326, N357, N358, D359, K372, G412, D413, D441, and S442.

Belongs to the myo-inositol 1-phosphate synthase family. Homotetramer. Requires NAD(+) as cofactor.

It localises to the cytoplasm. The catalysed reaction is D-glucose 6-phosphate = 1D-myo-inositol 3-phosphate. Its pathway is polyol metabolism; myo-inositol biosynthesis; myo-inositol from D-glucose 6-phosphate: step 1/2. Key enzyme in myo-inositol biosynthesis pathway that catalyzes the conversion of glucose 6-phosphate to 1-myo-inositol 1-phosphate in a NAD-dependent manner. Rate-limiting enzyme in the synthesis of all inositol-containing compounds. This is Inositol-3-phosphate synthase (INO1) from Candida glabrata (strain ATCC 2001 / BCRC 20586 / JCM 3761 / NBRC 0622 / NRRL Y-65 / CBS 138) (Yeast).